Here is a 72-residue protein sequence, read N- to C-terminus: Translation initiation factor IF-1 (72 aa).

An S1-like domain is found at 1 to 72 (MAREDHIEME…SKGRIVYRAR (72 aa)).

The protein belongs to the IF-1 family. In terms of assembly, component of the 30S ribosomal translation pre-initiation complex which assembles on the 30S ribosome in the order IF-2 and IF-3, IF-1 and N-formylmethionyl-tRNA(fMet); mRNA recruitment can occur at any time during PIC assembly.

It is found in the cytoplasm. Functionally, one of the essential components for the initiation of protein synthesis. Stabilizes the binding of IF-2 and IF-3 on the 30S subunit to which N-formylmethionyl-tRNA(fMet) subsequently binds. Helps modulate mRNA selection, yielding the 30S pre-initiation complex (PIC). Upon addition of the 50S ribosomal subunit IF-1, IF-2 and IF-3 are released leaving the mature 70S translation initiation complex. The protein is Translation initiation factor IF-1 of Chromohalobacter salexigens (strain ATCC BAA-138 / DSM 3043 / CIP 106854 / NCIMB 13768 / 1H11).